Consider the following 394-residue polypeptide: Putative serine protease HhoA (394 aa).

The signal sequence occupies residues 1 to 24 (MKYPTWLRRIGGYLLAFAVGTAFG). One can recognise a PDZ domain in the interval 293–377 (MMNITVDQAQ…ALKLDLLRGD (85 aa)).

It belongs to the peptidase S1C family.

The protein localises to the periplasm. In terms of biological role, a putative protease, its function overlaps that of the related putative proteases HhoB and HtrA. The sequence is that of Putative serine protease HhoA (hhoA) from Synechocystis sp. (strain ATCC 27184 / PCC 6803 / Kazusa).